The chain runs to 913 residues: Cadherin-4 (913 aa).

The signal sequence occupies residues 1 to 19 (MRTGSRLLLVLLVWGSAAA). Residues 20-166 (LNGDLTVRPT…SAKGLRRQKR (147 aa)) constitute a propeptide that is removed on maturation. Cadherin domains are found at residues 167–274 (DWVI…RPEF), 275–389 (INQV…PPEF), 390–504 (TTST…APYF), 505–610 (PTNH…DNAP), and 611–721 (ELLP…TIGA). At 167 to 731 (DWVIPPINVP…VAAAGLGTGA (565 aa)) the chain is on the extracellular side. Residues Asn280, Asn409, Asn554, Asn629, Asn658, and Asn699 are each glycosylated (N-linked (GlcNAc...) asparagine). Residues 732–753 (IIAILICIIILLTMVLLFVVWM) form a helical membrane-spanning segment. The Cytoplasmic portion of the chain corresponds to 754–913 (KRREKERHTK…ADMYGGGEED (160 aa)).

In terms of tissue distribution, embryonic brain and neuronal retina.

The protein resides in the cell membrane. Cadherins are calcium-dependent cell adhesion proteins. They preferentially interact with themselves in a homophilic manner in connecting cells; cadherins may thus contribute to the sorting of heterogeneous cell types. May play an important role in retinal development. This chain is Cadherin-4 (CDH4), found in Gallus gallus (Chicken).